Consider the following 651-residue polypeptide: ATP-dependent zinc metalloprotease FtsH (651 aa).

The Extracellular portion of the chain corresponds to 1 to 134 (MIVFATILFG…FTTDPQTAGP (134 aa)). The helical transmembrane segment at 135 to 155 (WARAIAVMAPFVLILLLFFLM) threads the bilayer. The Cytoplasmic segment spans residues 156–651 (TRTGRSASQS…PAMSVNGHRG (496 aa)). 229-236 (GPPGTGKT) is an ATP binding site. His-451 provides a ligand contact to Zn(2+). Glu-452 is a catalytic residue. Zn(2+)-binding residues include His-455 and Asp-527.

This sequence in the central section; belongs to the AAA ATPase family. It in the C-terminal section; belongs to the peptidase M41 family. In terms of assembly, homohexamer. It depends on Zn(2+) as a cofactor.

It localises to the cell membrane. Functionally, acts as a processive, ATP-dependent zinc metallopeptidase for both cytoplasmic and membrane proteins. Plays a role in the quality control of integral membrane proteins. The polypeptide is ATP-dependent zinc metalloprotease FtsH (Rubrobacter xylanophilus (strain DSM 9941 / JCM 11954 / NBRC 16129 / PRD-1)).